A 153-amino-acid polypeptide reads, in one-letter code: MTEVIAYLIEHFQDFDTCPPPEDLGMLLEEAGFDTMEIGNTLMMMEVLLNSSEFSAEPADSGALRVYSKEETDNLPQEVMGLMQYLIEEKAVSCEQREIIIHALMHIPGDEITVDTAKVLTLLLLWANKSELPVLVGDELMSALLLDNKPTMN.

It belongs to the Smg family.

This Neisseria meningitidis serogroup B (strain ATCC BAA-335 / MC58) protein is Protein Smg homolog.